A 126-amino-acid chain; its full sequence is Protein ApaG (126 aa).

The 125-residue stretch at 2-126 (DVSQPRIQIQ…FRLAVPNILN (125 aa)) folds into the ApaG domain.

The chain is Protein ApaG from Vibrio vulnificus (strain CMCP6).